We begin with the raw amino-acid sequence, 199 residues long: Peptidyl-tRNA hydrolase (199 aa).

Tyr-25 serves as a coordination point for tRNA. His-30 serves as the catalytic Proton acceptor. The tRNA site is built by Tyr-76, Asn-78, and Asn-124.

Belongs to the PTH family. As to quaternary structure, monomer.

It localises to the cytoplasm. The enzyme catalyses an N-acyl-L-alpha-aminoacyl-tRNA + H2O = an N-acyl-L-amino acid + a tRNA + H(+). Functionally, hydrolyzes ribosome-free peptidyl-tRNAs (with 1 or more amino acids incorporated), which drop off the ribosome during protein synthesis, or as a result of ribosome stalling. Catalyzes the release of premature peptidyl moieties from peptidyl-tRNA molecules trapped in stalled 50S ribosomal subunits, and thus maintains levels of free tRNAs and 50S ribosomes. The chain is Peptidyl-tRNA hydrolase from Mycobacterium leprae (strain Br4923).